A 205-amino-acid chain; its full sequence is GTP-binding protein yptV5 (205 aa).

15-22 (GDSGVGKT) is a GTP binding site. An Effector region motif is present at residues 37-45 (YKATIGADF). Residues 63-67 (DTAGQ) and 125-128 (NKID) each bind GTP. Residues C204 and C205 are each lipidated (S-geranylgeranyl cysteine).

Belongs to the small GTPase superfamily. Rab family.

It is found in the cell membrane. Protein transport. Probably involved in vesicular traffic. This is GTP-binding protein yptV5 (YPTV5) from Volvox carteri (Green alga).